We begin with the raw amino-acid sequence, 192 residues long: Orotate phosphoribosyltransferase (192 aa).

5-phospho-alpha-D-ribose 1-diphosphate-binding positions include Arg102, Lys103, Lys106, and 129-137 (EDVVTTGRS). Orotate contacts are provided by Thr133 and Arg161.

The protein belongs to the purine/pyrimidine phosphoribosyltransferase family. PyrE subfamily. As to quaternary structure, homodimer. Mg(2+) serves as cofactor.

It carries out the reaction orotidine 5'-phosphate + diphosphate = orotate + 5-phospho-alpha-D-ribose 1-diphosphate. The protein operates within pyrimidine metabolism; UMP biosynthesis via de novo pathway; UMP from orotate: step 1/2. Its function is as follows. Catalyzes the transfer of a ribosyl phosphate group from 5-phosphoribose 1-diphosphate to orotate, leading to the formation of orotidine monophosphate (OMP). This Prochlorococcus marinus (strain SARG / CCMP1375 / SS120) protein is Orotate phosphoribosyltransferase.